A 695-amino-acid polypeptide reads, in one-letter code: Elongation factor G 1 (695 aa).

The region spanning 6 to 284 is the tr-type G domain; the sequence is SKVRNIGISA…AVETYLPCPT (279 aa). Residues 15–22, 82–86, and 136–139 contribute to the GTP site; these read AHIDSGKT, DTPGH, and NKCD.

Belongs to the TRAFAC class translation factor GTPase superfamily. Classic translation factor GTPase family. EF-G/EF-2 subfamily.

Its subcellular location is the cytoplasm. In terms of biological role, catalyzes the GTP-dependent ribosomal translocation step during translation elongation. During this step, the ribosome changes from the pre-translocational (PRE) to the post-translocational (POST) state as the newly formed A-site-bound peptidyl-tRNA and P-site-bound deacylated tRNA move to the P and E sites, respectively. Catalyzes the coordinated movement of the two tRNA molecules, the mRNA and conformational changes in the ribosome. The polypeptide is Elongation factor G 1 (Desulfotalea psychrophila (strain LSv54 / DSM 12343)).